The chain runs to 181 residues: Oligoribonuclease (181 aa).

The region spanning 8-171 (LIWIDLEMTG…DDIRESVAEL (164 aa)) is the Exonuclease domain. Residue Tyr129 is part of the active site.

Belongs to the oligoribonuclease family.

It localises to the cytoplasm. Its function is as follows. 3'-to-5' exoribonuclease specific for small oligoribonucleotides. This chain is Oligoribonuclease, found in Yersinia enterocolitica serotype O:8 / biotype 1B (strain NCTC 13174 / 8081).